The following is a 291-amino-acid chain: MEPLRKPLVPVKGIPLIKYFAETMEQLQNFTAWPDDVLISTYPKSGTNWMSEIMDMIYQGGKLDKCGRAPVYARIPFLEFSCPGVPPGLETLKETPAPRIIKTHLPLSLLPQSLLDQKIKVIYVARNAKDVVVSYYNFYKMAKLHPDPGTWESFLENFMDGKVSYGSWYQHVKEWWELRRTHPVLYLFYEDMKENPKREIKKILEFLGRSLPEETVDLIVHHTSFKKMKENPMANYTTIPTEVMDHTIYPFMRKGTIGDWKNTFTVAQSEHFDAHYAKLMTGCDFTFRCQI.

44–49 (KSGTNW) provides a ligand contact to 3'-phosphoadenylyl sulfate. 102 to 104 (KTH) is a binding site for substrate. His-104 functions as the Proton acceptor in the catalytic mechanism. 3'-phosphoadenylyl sulfate contacts are provided by residues Arg-126, Ser-134, Tyr-189, 223 to 228 (TSFKKM), and 251 to 255 (FMRKG). Phosphoserine is present on Ser-134.

This sequence belongs to the sulfotransferase 1 family. Homodimer. Expressed in brain, colon, liver, and small intestine of mice colonized with B.ovatus and L.plantarum.

The protein resides in the cytoplasm. It catalyses the reaction a phenol + 3'-phosphoadenylyl sulfate = an aryl sulfate + adenosine 3',5'-bisphosphate + H(+). The catalysed reaction is 17beta-estradiol + 3'-phosphoadenylyl sulfate = 17beta-estradiol 3-sulfate + adenosine 3',5'-bisphosphate + H(+). The enzyme catalyses 4-ethylphenol + 3'-phosphoadenylyl sulfate = 4-ethylphenyl sulfate + adenosine 3',5'-bisphosphate + H(+). It carries out the reaction 4-nitrophenol + 3'-phosphoadenylyl sulfate = 4-nitrophenyl sulfate + adenosine 3',5'-bisphosphate. It catalyses the reaction dopamine + 3'-phosphoadenylyl sulfate = dopamine 3-O-sulfate + adenosine 3',5'-bisphosphate + H(+). The catalysed reaction is dopamine + 3'-phosphoadenylyl sulfate = dopamine 4-O-sulfate + adenosine 3',5'-bisphosphate + H(+). The enzyme catalyses 3,3',5-triiodo-L-thyronine + 3'-phosphoadenylyl sulfate = 3,3',5-triiodo-L-thyronine sulfate + adenosine 3',5'-bisphosphate + H(+). It carries out the reaction 3,3',5'-triiodo-L-thyronine + 3'-phosphoadenylyl sulfate = 3,3',5'-triiodo-L-thyronine sulfate + adenosine 3',5'-bisphosphate + H(+). It catalyses the reaction 3,3'-diiodo-L-thyronine + 3'-phosphoadenylyl sulfate = 3,3'-diiodo-L-thyronine sulfate + adenosine 3',5'-bisphosphate + H(+). The catalysed reaction is L-thyroxine + 3'-phosphoadenylyl sulfate = L-thyroxine sulfate + adenosine 3',5'-bisphosphate + H(+). Its function is as follows. Sulfotransferase that utilizes 3'-phospho-5'-adenylyl sulfate (PAPS) as sulfonate donor to catalyze the sulfate conjugation of a wide variety of acceptor molecules bearing a hydroxyl or an amine group. Sulfonation increases the water solubility of most compounds, and therefore their renal excretion, but it can also result in bioactivation to form active metabolites. Displays broad substrate specificity for small phenolic compounds. Plays an important role in the sulfonation of endogenous molecules such as steroid hormones. Mediates also the metabolic activation of carcinogenic N-hydroxyarylamines leading to highly reactive intermediates capable of forming DNA adducts, potentially resulting in mutagenesis. May play a role in gut microbiota-host metabolic interaction. O-sulfonates 4-ethylphenol (4-EP), a dietary tyrosine-derived metabolite produced by gut bacteria. The product 4-EPS crosses the blood-brain barrier and may negatively regulate oligodendrocyte maturation and myelination, affecting the functional connectivity of different brain regions associated with the limbic system. Catalyzes the sulfate conjugation of dopamine. Catalyzes the sulfation of T4 (L-thyroxine/3,5,3',5'-tetraiodothyronine), T3 (3,5,3'-triiodothyronine), rT3 (3,3',5'-triiodothyronine) and 3,3'-T2 (3,3'-diiodothyronine), with a substrate preference of 3,3'-T2 &gt; rT3 &gt; T3 &gt; T4. In Mus musculus (Mouse), this protein is Sulfotransferase 1A1 (Sult1a1).